A 202-amino-acid chain; its full sequence is uncharacterized protein (202 aa).

The interval 179–202 is disordered; it reads FDEQDSTPELPPNYLLDSQKKSQG.

This is an uncharacterized protein from Haemophilus influenzae (strain ATCC 51907 / DSM 11121 / KW20 / Rd).